We begin with the raw amino-acid sequence, 334 residues long: Mitochondrial glycine transporter (334 aa).

3 Solcar repeats span residues 10-94, 127-211, and 234-318; these read SKSS…IRQA, LSNT…FKRR, and RAAA…LIMR. Helical transmembrane passes span 16–41, 69–95, 133–158, 186–209, 238–264, and 293–311; these read FVAG…TRVQ, GTVP…RQAA, LLAG…VRYE, GFGA…EQFK, VNFS…KTRI, and GLGL…AWTL.

This sequence belongs to the mitochondrial carrier (TC 2.A.29) family. SLC25A38 subfamily.

The protein localises to the mitochondrion inner membrane. It catalyses the reaction glycine(in) = glycine(out). Mitochondrial glycine transporter that imports glycine into the mitochondrial matrix. Plays an important role in providing glycine for the first enzymatic step in heme biosynthesis, the condensation of glycine with succinyl-CoA to produce 5-aminolevulinate (ALA) in the mitochondrial matrix. The chain is Mitochondrial glycine transporter from Pyricularia oryzae (strain 70-15 / ATCC MYA-4617 / FGSC 8958) (Rice blast fungus).